We begin with the raw amino-acid sequence, 310 residues long: Olfactory receptor 2A7 (310 aa).

The Extracellular segment spans residues 1–24 (MGNNMTLITEFILLGFPLSPRMQM). Residue asparagine 4 is glycosylated (N-linked (GlcNAc...) asparagine). The helical transmembrane segment at 25–45 (LLFALFSLFYAFTLLGNGTIV) threads the bilayer. Topologically, residues 46–53 (GLICLDSR) are cytoplasmic. Residues 54-74 (LHTPMYFFLSHLAIVDIAYAC) traverse the membrane as a helical segment. Over 75-96 (NTVPQMLVNLLDPVKPISYAGC) the chain is Extracellular. An intrachain disulfide couples cysteine 96 to cysteine 178. The helical transmembrane segment at 97-117 (MTQTFLFLTFAITECLLLVVM) threads the bilayer. The Cytoplasmic segment spans residues 118–148 (SYDRYVAICHPLRYSAIMSWRVCSTMAVTSW). The helical transmembrane segment at 149–169 (IIGVLLSLIHLVLLLPLPFCV) threads the bilayer. Residues 170–204 (SQKVNHFFCEITAILKLACADTHLNETMVLAGAVS) are Extracellular-facing. Asparagine 194 carries N-linked (GlcNAc...) asparagine glycosylation. A helical membrane pass occupies residues 205 to 225 (VLVGPFSSIVVSYACILGAIL). The Cytoplasmic portion of the chain corresponds to 226 to 239 (KIQSEEGQRKAFST). Residues 240–260 (CSSHLCVVGLFYGTAIVMYVG) traverse the membrane as a helical segment. Residues 261–273 (PRHGSPKEQKKYL) are Extracellular-facing. A helical transmembrane segment spans residues 274-291 (LLFHSLFNPMLNPLIYSL). The Cytoplasmic portion of the chain corresponds to 292–310 (RNSDVKNTLKRVLRTQRAL).

It belongs to the G-protein coupled receptor 1 family. In terms of tissue distribution, olfactory epithelium.

It localises to the cell membrane. In terms of biological role, odorant receptor. The protein is Olfactory receptor 2A7 of Mus musculus (Mouse).